We begin with the raw amino-acid sequence, 283 residues long: Pantothenate synthetase (283 aa).

Residue 30-37 (MGNLHDGH) coordinates ATP. H37 (proton donor) is an active-site residue. Residue Q61 participates in (R)-pantoate binding. Residue Q61 participates in beta-alanine binding. 149–152 (GEKD) is a binding site for ATP. Position 155 (Q155) interacts with (R)-pantoate. Residue 186–189 (LSSR) participates in ATP binding.

Belongs to the pantothenate synthetase family. As to quaternary structure, homodimer.

The protein localises to the cytoplasm. The enzyme catalyses (R)-pantoate + beta-alanine + ATP = (R)-pantothenate + AMP + diphosphate + H(+). The protein operates within cofactor biosynthesis; (R)-pantothenate biosynthesis; (R)-pantothenate from (R)-pantoate and beta-alanine: step 1/1. Functionally, catalyzes the condensation of pantoate with beta-alanine in an ATP-dependent reaction via a pantoyl-adenylate intermediate. In Escherichia coli (strain ATCC 8739 / DSM 1576 / NBRC 3972 / NCIMB 8545 / WDCM 00012 / Crooks), this protein is Pantothenate synthetase.